Reading from the N-terminus, the 113-residue chain is Eukaryotic translation initiation factor 1b (113 aa).

S2 bears the N-acetylserine mark. S9 carries the post-translational modification Phosphoserine.

Belongs to the SUI1 family.

Probably involved in translation. The polypeptide is Eukaryotic translation initiation factor 1b (EIF1B) (Homo sapiens (Human)).